Reading from the N-terminus, the 302-residue chain is Dioxygenase ALT11 (302 aa).

Residues 1–22 (MSSPELPSQMGVPNGHTKLQEV) are disordered. 3 residues coordinate Fe cation: H147, D149, and H223.

The protein belongs to the PhyH family. In terms of assembly, homodimer. Fe cation serves as cofactor.

The protein operates within mycotoxin biosynthesis. In terms of biological role, dioxygenase; part of the gene cluster that mediates the biosynthesis of the host-selective toxins (HSTs) AAL-toxins, sphinganine-analog mycotoxins responsible for Alternaria stem canker on tomato by the tomato pathotype. The biosynthesis starts with the polyketide synthase ALT1-catalyzed C-16 carbon chain assembly from one starter acetyl-CoA unit with malonyl-CoA extender units. ALT1 also selectively transfers methyl groups at the first and the third cycle of chain elongation for AAL toxin. The C-16 polyketide chain is released from the enzyme by a nucleophilic attack of a carbanion, which is derived from R-carbon of glycin by decarboxylation, on the carbonyl carbon of polyketide acyl chain. This step is probably catalyzed by a pyridoxal 5'-phosphate-dependent aminoacyl transferase ALT4. The respective functions of the other enzymes encoded by the cluster have still to be elucidated. The sphingosine N-acyltransferase-like protein ALT7 seems not to act as a resistance/self-tolerance factor against the toxin in the toxin biosynthetic gene cluster, contrary to what is expected. This Alternaria alternata (Alternaria rot fungus) protein is Dioxygenase ALT11.